We begin with the raw amino-acid sequence, 337 residues long: 4-hydroxyproline 2-epimerase (337 aa).

Catalysis depends on cysteine 91, which acts as the Proton acceptor. Substrate is bound by residues 92–93 (GH), aspartate 252, and 257–258 (GT).

It belongs to the proline racemase family.

The enzyme catalyses trans-4-hydroxy-L-proline = cis-4-hydroxy-D-proline. Catalyzes the epimerization of trans-4-hydroxy-L-proline (t4LHyp) to cis-4-hydroxy-D-proline (c4DHyp). Is likely involved in a degradation pathway that converts t4LHyp to alpha-ketoglutarate. Displays no proline racemase activity. This Cereibacter sphaeroides (strain ATCC 17029 / ATH 2.4.9) (Rhodobacter sphaeroides) protein is 4-hydroxyproline 2-epimerase.